The chain runs to 89 residues: Large ribosomal subunit protein bL27 (89 aa).

A disordered region spans residues 1-24; the sequence is MAHKKGTGSTRNGRDSNSKRLGVK.

It belongs to the bacterial ribosomal protein bL27 family.

The protein is Large ribosomal subunit protein bL27 of Synechococcus sp. (strain WH7803).